Consider the following 879-residue polypeptide: Alanine--tRNA ligase 1 (879 aa).

H566, H570, C668, and H672 together coordinate Zn(2+).

The protein belongs to the class-II aminoacyl-tRNA synthetase family. Zn(2+) is required as a cofactor.

The protein resides in the cytoplasm. It carries out the reaction tRNA(Ala) + L-alanine + ATP = L-alanyl-tRNA(Ala) + AMP + diphosphate. Functionally, catalyzes the attachment of alanine to tRNA(Ala) in a two-step reaction: alanine is first activated by ATP to form Ala-AMP and then transferred to the acceptor end of tRNA(Ala). Also edits incorrectly charged Ser-tRNA(Ala) and Gly-tRNA(Ala) via its editing domain. In Lachnoclostridium phytofermentans (strain ATCC 700394 / DSM 18823 / ISDg) (Clostridium phytofermentans), this protein is Alanine--tRNA ligase 1.